Here is a 201-residue protein sequence, read N- to C-terminus: Glutathione peroxidase 1 (201 aa).

Ser-32 carries the post-translational modification Phosphoserine. Residue Sec-47 is part of the active site. A non-standard amino acid (selenocysteine) is located at residue Sec-47. An N6-acetyllysine; alternate mark is found at Lys-86, Lys-112, and Lys-146. 3 positions are modified to N6-succinyllysine; alternate: Lys-86, Lys-112, and Lys-146. Phosphoserine occurs at positions 195 and 199.

It belongs to the glutathione peroxidase family. Homotetramer. Interacts with MIEN1. Post-translationally, during periods of oxidative stress, Sec-47 may react with a superoxide radical, irreversibly lose hydroselenide and be converted to dehydroalanine.

The protein localises to the cytoplasm. It is found in the mitochondrion. It carries out the reaction 2 glutathione + H2O2 = glutathione disulfide + 2 H2O. It catalyses the reaction a hydroperoxy polyunsaturated fatty acid + 2 glutathione = a hydroxy polyunsaturated fatty acid + glutathione disulfide + H2O. The enzyme catalyses tert-butyl hydroperoxide + 2 glutathione = tert-butanol + glutathione disulfide + H2O. The catalysed reaction is cumene hydroperoxide + 2 glutathione = 2-phenylpropan-2-ol + glutathione disulfide + H2O. It carries out the reaction (13S)-hydroperoxy-(9Z,11E)-octadecadienoate + 2 glutathione = (13S)-hydroxy-(9Z,11E)-octadecadienoate + glutathione disulfide + H2O. It catalyses the reaction (9S)-hydroperoxy-(10E,12Z)-octadecadienoate + 2 glutathione = (9S)-hydroxy-(10E,12Z)-octadecadienoate + glutathione disulfide + H2O. The enzyme catalyses (5S)-hydroperoxy-(6E,8Z,11Z,14Z)-eicosatetraenoate + 2 glutathione = (5S)-hydroxy-(6E,8Z,11Z,14Z)-eicosatetraenoate + glutathione disulfide + H2O. The catalysed reaction is (12S)-hydroperoxy-(5Z,8Z,10E,14Z)-eicosatetraenoate + 2 glutathione = (12S)-hydroxy-(5Z,8Z,10E,14Z)-eicosatetraenoate + glutathione disulfide + H2O. It carries out the reaction (12R)-hydroperoxy-(5Z,8Z,10E,14Z)-eicosatetraenoate + 2 glutathione = (12R)-hydroxy-(5Z,8Z,10E,14Z)-eicosatetraenoate + glutathione disulfide + H2O. It catalyses the reaction (15S)-hydroperoxy-(5Z,8Z,11Z,13E)-eicosatetraenoate + 2 glutathione = (15S)-hydroxy-(5Z,8Z,11Z,13E)-eicosatetraenoate + glutathione disulfide + H2O. The enzyme catalyses (5S)-hydroperoxy-(6E,8Z,11Z,14Z,17Z)-eicosapentaenoate + 2 glutathione = (5S)-hydroxy-(6E,8Z,11Z,14Z,17Z)-eicosapentaenoate + glutathione disulfide + H2O. The catalysed reaction is (12S)-hydroperoxy-(5Z,8Z,10E,14Z,17Z)-eicosapentaenoate + 2 glutathione = (12S)-hydroxy-(5Z,8Z,10E,14Z,17Z)-eicosapentaenoate + glutathione disulfide + H2O. It carries out the reaction (15S)-hydroperoxy-(5Z,8Z,11Z,13E,17Z)-eicosapentaenoate + 2 glutathione = (15S)-hydroxy-(5Z,8Z,11Z,13E,17Z)-eicosapentaenoate + glutathione disulfide + H2O. It catalyses the reaction (15S)-hydroperoxy-(11Z,13E)-eicosadienoate + 2 glutathione = (15S)-hydroxy-(11Z,13E)-eicosadienoate + glutathione disulfide + H2O. The enzyme catalyses (17S)-hydroperoxy-(4Z,7Z,10Z,13Z,15E,19Z)-docosahexaenoate + 2 glutathione = (17S)-hydroxy-(4Z,7Z,10Z,13Z,15E,19Z)-docosahexaenoate + glutathione disulfide + H2O. Functionally, catalyzes the reduction of hydroperoxides in a glutathione-dependent manner thus regulating cellular redox homeostasis. Can reduce small soluble hydroperoxides such as H2O2, cumene hydroperoxide and tert-butyl hydroperoxide, as well as several fatty acid-derived hydroperoxides. In platelets catalyzes the reduction of 12-hydroperoxyeicosatetraenoic acid, the primary product of the arachidonate 12-lipoxygenase pathway. This Callithrix jacchus (White-tufted-ear marmoset) protein is Glutathione peroxidase 1 (GPX1).